Reading from the N-terminus, the 765-residue chain is Cullin-5 (765 aa).

Residues 696-757 (RELRVQEGIV…NKYMERRADD (62 aa)) enclose the Cullin neddylation domain. K709 participates in a covalent cross-link: Glycyl lysine isopeptide (Lys-Gly) (interchain with G-Cter in NEDD8).

It belongs to the cullin family. Interacts with rbx-1 and rbx-2. In terms of processing, neddylated; which enhances the ubiquitination activity of SCF-like complex.

It participates in protein modification; protein ubiquitination. Its function is as follows. Probable core component of cullin-based SCF-like E3 ubiquitin-protein ligase complexes which mediate the ubiquitination and subsequent proteasomal degradation of target proteins. In association with rbx-2 seems to be involved in meiotic cell cycle progression in the germline. Required for phosphorylation of the MAP kinase MPK-1 in the germline. The polypeptide is Cullin-5 (cul-5) (Caenorhabditis elegans).